A 372-amino-acid polypeptide reads, in one-letter code: Aminomethyltransferase (372 aa).

This sequence belongs to the GcvT family. In terms of assembly, the glycine cleavage system is composed of four proteins: P, T, L and H.

It catalyses the reaction N(6)-[(R)-S(8)-aminomethyldihydrolipoyl]-L-lysyl-[protein] + (6S)-5,6,7,8-tetrahydrofolate = N(6)-[(R)-dihydrolipoyl]-L-lysyl-[protein] + (6R)-5,10-methylene-5,6,7,8-tetrahydrofolate + NH4(+). The glycine cleavage system catalyzes the degradation of glycine. In Burkholderia cenocepacia (strain ATCC BAA-245 / DSM 16553 / LMG 16656 / NCTC 13227 / J2315 / CF5610) (Burkholderia cepacia (strain J2315)), this protein is Aminomethyltransferase.